Reading from the N-terminus, the 714-residue chain is A-kinase anchor protein 5 (714 aa).

Disordered regions lie at residues methionine 1–arginine 146 and valine 243–threonine 333. The essential to the intracellular anchoring function stretch occupies residues methionine 1–glutamate 164. A phosphoserine mark is found at serine 4 and serine 22. Residues isoleucine 10–threonine 32 are compositionally biased toward basic and acidic residues. The S-palmitoyl cysteine moiety is linked to residue cysteine 36. Over residues phenylalanine 37–alanine 50 the composition is skewed to basic residues. Composition is skewed to basic and acidic residues over residues threonine 54–proline 63 and lysine 88–glutamate 100. Residues alanine 74–glutamate 94 carry the AKAP CaM-binding motif. The S-palmitoyl cysteine moiety is linked to residue cysteine 123. Residues valine 243–glutamine 268 are compositionally biased toward polar residues. The span at glycine 285 to glycine 301 shows a compositional bias: basic and acidic residues. One copy of the 1; approximate repeat lies at leucine 305–serine 312. The 28 X 8 AA repeats of V-G-Q-A-E-E-A-T stretch occupies residues leucine 305–valine 597. Positions glutamate 310–serine 323 are enriched in polar residues. A 2; approximate repeat occupies leucine 322–threonine 329. The stretch at valine 330–threonine 337 is one 3; approximate repeat. A 4; approximate repeat occupies leucine 350–threonine 357. The stretch at valine 358–valine 365 is one 5; approximate repeat. The 6; approximate repeat unit spans residues leucine 366–lysine 373. A 7; approximate repeat occupies valine 398–isoleucine 405. The stretch at methionine 414–threonine 421 is one 8; approximate repeat. A run of 5 repeats spans residues valine 430–threonine 437, valine 438–threonine 445, valine 446–threonine 453, valine 454–threonine 461, and valine 462–threonine 469. The 14; approximate repeat unit spans residues valine 470–threonine 477. A 15; approximate repeat occupies valine 486–isoleucine 493. 4 consecutive repeat copies span residues valine 494–threonine 501, valine 502–threonine 509, valine 510–threonine 517, and valine 518–threonine 525. The stretch at valine 526–threonine 533 is one 20; approximate repeat. Copy 21 of the repeat occupies valine 534 to threonine 541. A 22; approximate repeat occupies valine 542–alanine 549. The stretch at valine 550–isoleucine 557 is one 23; approximate repeat. The stretch at valine 558–threonine 565 is one 24; approximate repeat. Repeat unit 25 spans residues valine 566–threonine 573. A 26; approximate repeat occupies valine 574 to threonine 581. The 27; approximate repeat unit spans residues valine 582–isoleucine 589. One copy of the 28; approximate repeat lies at valine 590–valine 597. Residues tyrosine 675 to glutamate 696 are RII-beta subunit binding domain. Residues glutamine 697–glutamine 714 are tethers NFATC2 to CRAC channels.

In terms of assembly, binding protein for dimer of the RII-beta regulatory subunit of cAMP-dependent protein kinase (PKA) and also for the protein kinase C (PKC) and the phosphatase calcineurin (PP2B). Each enzyme is inhibited when bound to the anchoring protein. Also binds the beta2-adrenergic receptor. Part of a complex containing AKAP5, ADCY5, ADCY6 and PDE4C. Interacts with ADCY8, and enhances its phosphorylation at lipid rafts. Interacts with ORAI1 (isoform alpha) (via N-terminus) upon store depletion and in response to LTC4. Does not interact with ORAI2 and ORAI3 paralogs. Interacts (via leucine zipper domain) with NFATC2/NFAT1. Interacts with calmodulin; the interaction is calcium-independent. Interacts with KCNQ2; the interaction may help KCNQ2 channel complex to retain calcium-bound calmodulin. Interacts with KCNK2; the channel is recruited to postsynaptic microdomains by AKAP5 where it can integrate neurotransmitter receptor signals. Part of a complex composed of AKAP5 and ADRB2. In terms of processing, palmitoylated. Palmitoylation at Cys-36 and Cys-123 plays a key role in the targeting of AKAP5 to lipid rafts. Palmitoylation by ZDHHC2 is required for AKAP5 function in LTP-stimulated recycling endosome exocytosis.

Its subcellular location is the postsynaptic recycling endosome membrane. It localises to the cell projection. It is found in the dendrite. The protein localises to the postsynaptic cell membrane. Multivalent scaffold protein that anchors the cAMP-dependent protein kinase/PKA to cytoskeletal and/or organelle-associated proteins, targeting the signal carried by cAMP to specific intracellular effectors. Association with the beta2-adrenergic receptor (beta2-AR) not only regulates beta2-AR signaling pathway, but also the activation by PKA by switching off the beta2-AR signaling cascade. Plays a role in long term synaptic potentiation by regulating protein trafficking from the dendritic recycling endosomes to the plasma membrane and controlling both structural and functional plasticity at excitatory synapses. In hippocampal pyramidal neurons, recruits KCNK2/TREK-1 channel at postsynaptic dense bodies microdomains and converts it to a leak channel no longer sensitive to stimulation by arachidonic acid, acidic pH or mechanical stress, nor inhibited by Gq-coupled receptors but still under the negative control of Gs-coupled receptors. Associates with ORAI1 pore-forming subunit of CRAC channels in Ca(2+) signaling microdomains where it recruits NFATC2/NFAT1 and couples store-operated Ca(2+) influx to calmodulin and calcineurin signaling and activation of NFAT-dependent transcriptional responses. In Rattus norvegicus (Rat), this protein is A-kinase anchor protein 5 (Akap5).